A 1595-amino-acid polypeptide reads, in one-letter code: Pentafunctional AROM polypeptide (1595 aa).

A 3-dehydroquinate synthase region spans residues 1–384; sequence MGVPTKISIL…HEPRASTVSN (384 aa). NAD(+) is bound by residues 44 to 46, 81 to 84, 114 to 116, and aspartate 119; these read DTN, ESSK, and GGV. Arginine 130 is a binding site for 7-phospho-2-dehydro-3-deoxy-D-arabino-heptonate. 139-140 is a binding site for NAD(+); it reads TT. The 7-phospho-2-dehydro-3-deoxy-D-arabino-heptonate site is built by aspartate 146 and lysine 152. Position 161 (lysine 161) interacts with NAD(+). A 7-phospho-2-dehydro-3-deoxy-D-arabino-heptonate-binding site is contributed by asparagine 162. NAD(+) is bound by residues 179–182 and asparagine 190; that span reads FLNT. Glutamate 194 contributes to the Zn(2+) binding site. 7-phospho-2-dehydro-3-deoxy-D-arabino-heptonate-binding positions include 194 to 197 and lysine 250; that span reads EVIK. The active-site Proton acceptor; for 3-dehydroquinate synthase activity is glutamate 260. Residues 264–268 and histidine 271 each bind 7-phospho-2-dehydro-3-deoxy-D-arabino-heptonate; that span reads RNLLN. Histidine 271 contributes to the Zn(2+) binding site. The active-site Proton acceptor; for 3-dehydroquinate synthase activity is histidine 275. 7-phospho-2-dehydro-3-deoxy-D-arabino-heptonate-binding residues include histidine 287 and lysine 356. Histidine 287 contributes to the Zn(2+) binding site. The EPSP synthase stretch occupies residues 397–842; it reads VSPGVPKGLD…WDSLAQTFKV (446 aa). Cysteine 824 acts as the For EPSP synthase activity in catalysis. The shikimate kinase stretch occupies residues 866–1057; the sequence is ASIFIIGMRG…RRKENTFFVS (192 aa). 872-879 contributes to the ATP binding site; it reads GMRGAGKT. The 3-dehydroquinase stretch occupies residues 1058-1278; sequence LTLPDLSLAA…AAPGQLSARE (221 aa). Catalysis depends on histidine 1181, which acts as the Proton acceptor; for 3-dehydroquinate dehydratase activity. Lysine 1209 serves as the catalytic Schiff-base intermediate with substrate; for 3-dehydroquinate dehydratase activity. Residues 1291-1595 are shikimate dehydrogenase; the sequence is AKKFAVIGNP…MGVSPSEDIL (305 aa).

The protein in the N-terminal section; belongs to the sugar phosphate cyclases superfamily. Dehydroquinate synthase family. It in the 2nd section; belongs to the EPSP synthase family. In the 3rd section; belongs to the shikimate kinase family. This sequence in the 4th section; belongs to the type-I 3-dehydroquinase family. The protein in the C-terminal section; belongs to the shikimate dehydrogenase family. Homodimer. The cofactor is Zn(2+).

The protein localises to the cytoplasm. The enzyme catalyses 7-phospho-2-dehydro-3-deoxy-D-arabino-heptonate = 3-dehydroquinate + phosphate. The catalysed reaction is 3-dehydroquinate = 3-dehydroshikimate + H2O. It carries out the reaction shikimate + NADP(+) = 3-dehydroshikimate + NADPH + H(+). It catalyses the reaction shikimate + ATP = 3-phosphoshikimate + ADP + H(+). The enzyme catalyses 3-phosphoshikimate + phosphoenolpyruvate = 5-O-(1-carboxyvinyl)-3-phosphoshikimate + phosphate. It functions in the pathway metabolic intermediate biosynthesis; chorismate biosynthesis; chorismate from D-erythrose 4-phosphate and phosphoenolpyruvate: step 2/7. It participates in metabolic intermediate biosynthesis; chorismate biosynthesis; chorismate from D-erythrose 4-phosphate and phosphoenolpyruvate: step 3/7. Its pathway is metabolic intermediate biosynthesis; chorismate biosynthesis; chorismate from D-erythrose 4-phosphate and phosphoenolpyruvate: step 4/7. The protein operates within metabolic intermediate biosynthesis; chorismate biosynthesis; chorismate from D-erythrose 4-phosphate and phosphoenolpyruvate: step 5/7. It functions in the pathway metabolic intermediate biosynthesis; chorismate biosynthesis; chorismate from D-erythrose 4-phosphate and phosphoenolpyruvate: step 6/7. The AROM polypeptide catalyzes 5 consecutive enzymatic reactions in prechorismate polyaromatic amino acid biosynthesis. This Ajellomyces capsulatus (strain G186AR / H82 / ATCC MYA-2454 / RMSCC 2432) (Darling's disease fungus) protein is Pentafunctional AROM polypeptide.